The sequence spans 65 residues: Antimicrobial peptide THP1 (65 aa).

A signal peptide spans 1-25; it reads MRIVYLLFPFILLLAQGAAGSSLAL. Cystine bridges form between C31–C53, C38–C59, and C43–C60. Residues 61 to 65 constitute a propeptide that is removed on maturation; the sequence is KTLLG.

This sequence belongs to the beta-defensin family.

The protein localises to the secreted. Bactericidal activity; inhibits S.aureus and E.coli. The chain is Antimicrobial peptide THP1 from Meleagris gallopavo (Wild turkey).